Reading from the N-terminus, the 143-residue chain is Nucleoside diphosphate kinase (143 aa).

ATP contacts are provided by Lys-11, Phe-59, Arg-87, Thr-93, Arg-104, and Asn-114. His-117 (pros-phosphohistidine intermediate) is an active-site residue.

This sequence belongs to the NDK family. As to quaternary structure, homotetramer. Mg(2+) is required as a cofactor.

It is found in the cytoplasm. The enzyme catalyses a 2'-deoxyribonucleoside 5'-diphosphate + ATP = a 2'-deoxyribonucleoside 5'-triphosphate + ADP. It catalyses the reaction a ribonucleoside 5'-diphosphate + ATP = a ribonucleoside 5'-triphosphate + ADP. Major role in the synthesis of nucleoside triphosphates other than ATP. The ATP gamma phosphate is transferred to the NDP beta phosphate via a ping-pong mechanism, using a phosphorylated active-site intermediate. The sequence is that of Nucleoside diphosphate kinase from Shewanella sp. (strain ANA-3).